Here is a 1040-residue protein sequence, read N- to C-terminus: Multidrug resistance protein MdtB (1040 aa).

Helical transmembrane passes span 25 to 45, 347 to 367, 369 to 389, 396 to 416, 440 to 460, 472 to 492, 537 to 557, 863 to 883, 888 to 908, 910 to 930, 968 to 988, and 998 to 1018; these read LLMA…PVAA, LMLA…NIPA, IIPG…MVFL, LTLM…IVVI, IGFT…PLLF, FAVT…TLTP, WLTL…WIVI, LGST…VLGV, FIHP…ALLA, IIAG…LIGI, ILMT…STGV, and IAMV…TPVI.

Belongs to the resistance-nodulation-cell division (RND) (TC 2.A.6) family. MdtB subfamily. As to quaternary structure, part of a tripartite efflux system composed of MdtA, MdtB and MdtC. MdtB forms a heteromultimer with MdtC.

The protein resides in the cell inner membrane. The protein is Multidrug resistance protein MdtB of Salmonella dublin (strain CT_02021853).